The primary structure comprises 145 residues: Globin-1 (145 aa).

In terms of domain architecture, Globin spans Gly-1–Tyr-145. Residues His-63 and His-92 each coordinate heme b.

This sequence belongs to the globin family. As to quaternary structure, monomer.

The sequence is that of Globin-1 from Liolophura japonica (Chiton).